The chain runs to 172 residues: Adenine phosphoribosyltransferase (172 aa).

Belongs to the purine/pyrimidine phosphoribosyltransferase family. As to quaternary structure, homodimer.

Its subcellular location is the cytoplasm. The enzyme catalyses AMP + diphosphate = 5-phospho-alpha-D-ribose 1-diphosphate + adenine. The protein operates within purine metabolism; AMP biosynthesis via salvage pathway; AMP from adenine: step 1/1. Functionally, catalyzes a salvage reaction resulting in the formation of AMP, that is energically less costly than de novo synthesis. The protein is Adenine phosphoribosyltransferase of Methanococcus maripaludis (strain C7 / ATCC BAA-1331).